The following is a 142-amino-acid chain: Putative pre-16S rRNA nuclease (142 aa).

This sequence belongs to the YqgF nuclease family.

It is found in the cytoplasm. Could be a nuclease involved in processing of the 5'-end of pre-16S rRNA. The protein is Putative pre-16S rRNA nuclease of Lactobacillus delbrueckii subsp. bulgaricus (strain ATCC 11842 / DSM 20081 / BCRC 10696 / JCM 1002 / NBRC 13953 / NCIMB 11778 / NCTC 12712 / WDCM 00102 / Lb 14).